The chain runs to 288 residues: Diaminopimelate epimerase (288 aa).

2 residues coordinate substrate: asparagine 14 and asparagine 67. The Proton donor role is filled by cysteine 76. Substrate contacts are provided by residues 77–78 (GN), asparagine 166, asparagine 199, and 217–218 (ER). Cysteine 226 functions as the Proton acceptor in the catalytic mechanism. 227 to 228 (GT) is a binding site for substrate.

Belongs to the diaminopimelate epimerase family. Homodimer.

It localises to the cytoplasm. The catalysed reaction is (2S,6S)-2,6-diaminopimelate = meso-2,6-diaminopimelate. It functions in the pathway amino-acid biosynthesis; L-lysine biosynthesis via DAP pathway; DL-2,6-diaminopimelate from LL-2,6-diaminopimelate: step 1/1. In terms of biological role, catalyzes the stereoinversion of LL-2,6-diaminopimelate (L,L-DAP) to meso-diaminopimelate (meso-DAP), a precursor of L-lysine and an essential component of the bacterial peptidoglycan. The chain is Diaminopimelate epimerase from Bacillus mycoides (strain KBAB4) (Bacillus weihenstephanensis).